The following is a 1475-amino-acid chain: Amylopullulanase (1475 aa).

An N-terminal signal peptide occupies residues 1-31 (MFKRRALGFLLAFLLVFTAVFGSMPMEFAKA). Ca(2+) contacts are provided by Asp-245, Asn-247, Asp-285, Asp-340, Asn-398, Asp-400, Asn-403, Asp-404, Gly-449, and Asp-451. Positions 524 and 627 each coordinate substrate. The active-site Nucleophile is the Asp-629. The active-site Proton donor is the Glu-658. Residues 734-735 (HD), Asp-794, and Arg-798 contribute to the substrate site. Fibronectin type-III domains lie at 928-1019 (APQP…PAFP) and 1164-1257 (TPTA…TPDI). Residues 1255 to 1362 (PDIIPIKVTF…VNDTVQRWRD (108 aa)) enclose the CBM20 domain.

This sequence belongs to the glycosyl hydrolase 13 family. It depends on Ca(2+) as a cofactor.

The enzyme catalyses Endohydrolysis of (1-&gt;4)-alpha-D-glucosidic linkages in polysaccharides containing three or more (1-&gt;4)-alpha-linked D-glucose units.. It catalyses the reaction Hydrolysis of (1-&gt;6)-alpha-D-glucosidic linkages in pullulan, amylopectin and glycogen, and in the alpha- and beta-limit dextrins of amylopectin and glycogen.. The polypeptide is Amylopullulanase (apu) (Thermoanaerobacter thermohydrosulfuricus (Clostridium thermohydrosulfuricum)).